The chain runs to 475 residues: MTTILTSTFRNLSTTSKWALRSSIRPLSCSSQLHSAPAVQTKSKKTLAKPNMKNIVVVEGVRIPFLLSGTSYKDLMPHDLARAALSGLLHRTNIPKDVVDYIIFGTVIQEVKTSNVAREAALGAGFSDKTPAHTVTMACISSNQAMTTAVGLIASGQCDVVVAGGVELMSDVPIRHSRNMRKMMLDLNKAKTLGQRLSLLSKFRLNFLSPELPAVAEFSTNETMGHSADRLAAAFAVSRMEQDEYALRSHSLAKKAQDEGHLSDIVPFKVPGKDTVTKDNGIRPSSLEQMAKLKPAFIKPYGTVTAANSSFLTDGASAMLIMSEDRALAMGYKPKAYLRDFIYVSQDPKDQLLLGPTYATPKVLEKAGLTMNDIDAFEFHEAFSGQILANFKAMDSDWFAQNYMGRKTKVGSPPLEKFNIWGGSLSLGHPFGATGCRLVMAAANRLRKDGGQYALVAACAAGGQGHAMIVEAYPK.

Residues 1–34 constitute a mitochondrion transit peptide; that stretch reads MTTILTSTFRNLSTTSKWALRSSIRPLSCSSQLH. Position 53 is an N6-succinyllysine (Lys-53). Lys-73 is subject to N6-acetyllysine; alternate. Lys-73 carries the post-translational modification N6-succinyllysine; alternate. Cys-139 (acyl-thioester intermediate) is an active-site residue. Residues 174–221 lie within the membrane without spanning it; the sequence is IRHSRNMRKMMLDLNKAKTLGQRLSLLSKFRLNFLSPELPAVAEFSTN. Lys-189 is subject to N6-acetyllysine; alternate. N6-succinyllysine; alternate is present on Lys-189. Lys-191, Lys-273, and Lys-292 each carry N6-succinyllysine. N6-acetyllysine; alternate is present on Lys-294. The residue at position 294 (Lys-294) is an N6-succinyllysine; alternate. Lys-299 carries the post-translational modification N6-acetyllysine. Lys-333 carries the post-translational modification N6-acetyllysine; alternate. Lys-333 carries the N6-succinyllysine; alternate modification. Residues Lys-349 and Lys-362 each carry the N6-acetyllysine modification. Residue Cys-459 is the Proton donor/acceptor of the active site.

The protein belongs to the thiolase-like superfamily. Thiolase family. As to quaternary structure, heterotetramer of 2 alpha/HADHA and 2 beta/HADHB subunits; forms the mitochondrial trifunctional enzyme. Also purified as higher order heterooligomers including a 4 alpha/HADHA and 4 beta/HADHB heterooligomer which physiological significance remains unclear. The mitochondrial trifunctional enzyme interacts with MTLN. Interacts with RSAD2/viperin. Acetylation of Lys-202 is observed in liver mitochondria from fasted mice but not from fed mice.

The protein resides in the mitochondrion. The protein localises to the mitochondrion inner membrane. Its subcellular location is the mitochondrion outer membrane. It localises to the endoplasmic reticulum. It carries out the reaction an acyl-CoA + acetyl-CoA = a 3-oxoacyl-CoA + CoA. The enzyme catalyses butanoyl-CoA + acetyl-CoA = 3-oxohexanoyl-CoA + CoA. It catalyses the reaction hexanoyl-CoA + acetyl-CoA = 3-oxooctanoyl-CoA + CoA. The catalysed reaction is octanoyl-CoA + acetyl-CoA = 3-oxodecanoyl-CoA + CoA. It carries out the reaction decanoyl-CoA + acetyl-CoA = 3-oxododecanoyl-CoA + CoA. The enzyme catalyses dodecanoyl-CoA + acetyl-CoA = 3-oxotetradecanoyl-CoA + CoA. It catalyses the reaction tetradecanoyl-CoA + acetyl-CoA = 3-oxohexadecanoyl-CoA + CoA. Its pathway is lipid metabolism; fatty acid beta-oxidation. Mitochondrial trifunctional enzyme catalyzes the last three of the four reactions of the mitochondrial beta-oxidation pathway. The mitochondrial beta-oxidation pathway is the major energy-producing process in tissues and is performed through four consecutive reactions breaking down fatty acids into acetyl-CoA. Among the enzymes involved in this pathway, the trifunctional enzyme exhibits specificity for long-chain fatty acids. Mitochondrial trifunctional enzyme is a heterotetrameric complex composed of two proteins, the trifunctional enzyme subunit alpha/HADHA carries the 2,3-enoyl-CoA hydratase and the 3-hydroxyacyl-CoA dehydrogenase activities, while the trifunctional enzyme subunit beta/HADHB described here bears the 3-ketoacyl-CoA thiolase activity. This chain is Trifunctional enzyme subunit beta, mitochondrial (Hadhb), found in Mus musculus (Mouse).